The chain runs to 263 residues: Endonuclease 8 (263 aa).

P2 serves as the catalytic Schiff-base intermediate with DNA. Residue E3 is the Proton donor of the active site. K53 (proton donor; for beta-elimination activity) is an active-site residue. The DNA site is built by Q70, R125, and N169. Residues 229 to 263 (KVFHRDGEPCERCGGIIEKTTLSSRPFYWCPGCQH) form an FPG-type zinc finger. The active-site Proton donor; for delta-elimination activity is the R253.

This sequence belongs to the FPG family. Zn(2+) is required as a cofactor.

It carries out the reaction 2'-deoxyribonucleotide-(2'-deoxyribose 5'-phosphate)-2'-deoxyribonucleotide-DNA = a 3'-end 2'-deoxyribonucleotide-(2,3-dehydro-2,3-deoxyribose 5'-phosphate)-DNA + a 5'-end 5'-phospho-2'-deoxyribonucleoside-DNA + H(+). In terms of biological role, involved in base excision repair of DNA damaged by oxidation or by mutagenic agents. Acts as a DNA glycosylase that recognizes and removes damaged bases. Has a preference for oxidized pyrimidines, such as thymine glycol, 5,6-dihydrouracil and 5,6-dihydrothymine. Has AP (apurinic/apyrimidinic) lyase activity and introduces nicks in the DNA strand. Cleaves the DNA backbone by beta-delta elimination to generate a single-strand break at the site of the removed base with both 3'- and 5'-phosphates. This chain is Endonuclease 8, found in Escherichia coli (strain UTI89 / UPEC).